Here is a 288-residue protein sequence, read N- to C-terminus: Dysbindin protein homolog (288 aa).

Residues 147–239 (AQLQNSSQVL…QRERQAVFDD (93 aa)) adopt a coiled-coil conformation.

The protein belongs to the dysbindin family. Component of the biogenesis of lysosome-related organelles complex-1 (BLOC-1) composed of Blos1, Blos2, Blos3, Blos4, Dysb, Muted, Pldn and Snapin. Interacts with Pldn and Snapin.

In terms of biological role, component of the biogenesis of lysosome-related organelles complex-1 (BLOC-1) involved in pigment granule biogenesis and membrane trafficking in synapses. In response to high synaptic activity at neuromuscular junctions, stabilizes Pldn protein levels and, together with Pldn, plays a role in promoting efficient synaptic vesicle recycling and re-formation through early endosomes. The chain is Dysbindin protein homolog from Drosophila melanogaster (Fruit fly).